The following is an 87-amino-acid chain: U3-theraphotoxin-Hhn1a 8 (87 aa).

The first 24 residues, 1–24, serve as a signal peptide directing secretion; that stretch reads MVNMKASMFLTFAGLVLLFVVCYA. The propeptide occupies 25–52; sequence SGSEEKEFPKEMLSSIFAVDNDFKQEER. Disulfide bonds link C54–C67, C61–C72, and C66–C79.

Belongs to the neurotoxin 10 (Hwtx-1) family. 51 (Hntx-8) subfamily. Hntx-8 sub-subfamily. Expressed by the venom gland.

It localises to the secreted. In terms of biological role, ion channel inhibitor. In Cyriopagopus hainanus (Chinese bird spider), this protein is U3-theraphotoxin-Hhn1a 8.